A 571-amino-acid polypeptide reads, in one-letter code: Proline--tRNA ligase (571 aa).

This sequence belongs to the class-II aminoacyl-tRNA synthetase family. ProS type 1 subfamily. As to quaternary structure, homodimer.

Its subcellular location is the cytoplasm. The enzyme catalyses tRNA(Pro) + L-proline + ATP = L-prolyl-tRNA(Pro) + AMP + diphosphate. Functionally, catalyzes the attachment of proline to tRNA(Pro) in a two-step reaction: proline is first activated by ATP to form Pro-AMP and then transferred to the acceptor end of tRNA(Pro). As ProRS can inadvertently accommodate and process non-cognate amino acids such as alanine and cysteine, to avoid such errors it has two additional distinct editing activities against alanine. One activity is designated as 'pretransfer' editing and involves the tRNA(Pro)-independent hydrolysis of activated Ala-AMP. The other activity is designated 'posttransfer' editing and involves deacylation of mischarged Ala-tRNA(Pro). The misacylated Cys-tRNA(Pro) is not edited by ProRS. The sequence is that of Proline--tRNA ligase from Azotobacter vinelandii (strain DJ / ATCC BAA-1303).